The primary structure comprises 241 residues: Ubiquinone biosynthesis O-methyltransferase (241 aa).

4 residues coordinate S-adenosyl-L-methionine: Arg42, Gly62, Asp83, and Met127.

This sequence belongs to the methyltransferase superfamily. UbiG/COQ3 family.

It carries out the reaction a 3-demethylubiquinol + S-adenosyl-L-methionine = a ubiquinol + S-adenosyl-L-homocysteine + H(+). It catalyses the reaction a 3-(all-trans-polyprenyl)benzene-1,2-diol + S-adenosyl-L-methionine = a 2-methoxy-6-(all-trans-polyprenyl)phenol + S-adenosyl-L-homocysteine + H(+). It participates in cofactor biosynthesis; ubiquinone biosynthesis. O-methyltransferase that catalyzes the 2 O-methylation steps in the ubiquinone biosynthetic pathway. This Pectobacterium atrosepticum (strain SCRI 1043 / ATCC BAA-672) (Erwinia carotovora subsp. atroseptica) protein is Ubiquinone biosynthesis O-methyltransferase.